The primary structure comprises 155 residues: 6,7-dimethyl-8-ribityllumazine synthase (155 aa).

Residues Phe-23, 57 to 59 (AFE), and 81 to 83 (AVI) each bind 5-amino-6-(D-ribitylamino)uracil. 86-87 (ST) lines the (2S)-2-hydroxy-3-oxobutyl phosphate pocket. His-89 acts as the Proton donor in catalysis. Phe-114 is a 5-amino-6-(D-ribitylamino)uracil binding site. A (2S)-2-hydroxy-3-oxobutyl phosphate-binding site is contributed by Arg-128.

It belongs to the DMRL synthase family.

The enzyme catalyses (2S)-2-hydroxy-3-oxobutyl phosphate + 5-amino-6-(D-ribitylamino)uracil = 6,7-dimethyl-8-(1-D-ribityl)lumazine + phosphate + 2 H2O + H(+). The protein operates within cofactor biosynthesis; riboflavin biosynthesis; riboflavin from 2-hydroxy-3-oxobutyl phosphate and 5-amino-6-(D-ribitylamino)uracil: step 1/2. Catalyzes the formation of 6,7-dimethyl-8-ribityllumazine by condensation of 5-amino-6-(D-ribitylamino)uracil with 3,4-dihydroxy-2-butanone 4-phosphate. This is the penultimate step in the biosynthesis of riboflavin. In Trichlorobacter lovleyi (strain ATCC BAA-1151 / DSM 17278 / SZ) (Geobacter lovleyi), this protein is 6,7-dimethyl-8-ribityllumazine synthase.